Reading from the N-terminus, the 93-residue chain is Aspartyl/glutamyl-tRNA(Asn/Gln) amidotransferase subunit C (93 aa).

It belongs to the GatC family. Heterotrimer of A, B and C subunits.

The enzyme catalyses L-glutamyl-tRNA(Gln) + L-glutamine + ATP + H2O = L-glutaminyl-tRNA(Gln) + L-glutamate + ADP + phosphate + H(+). It catalyses the reaction L-aspartyl-tRNA(Asn) + L-glutamine + ATP + H2O = L-asparaginyl-tRNA(Asn) + L-glutamate + ADP + phosphate + 2 H(+). Functionally, allows the formation of correctly charged Asn-tRNA(Asn) or Gln-tRNA(Gln) through the transamidation of misacylated Asp-tRNA(Asn) or Glu-tRNA(Gln) in organisms which lack either or both of asparaginyl-tRNA or glutaminyl-tRNA synthetases. The reaction takes place in the presence of glutamine and ATP through an activated phospho-Asp-tRNA(Asn) or phospho-Glu-tRNA(Gln). In Helicobacter pylori (strain HPAG1), this protein is Aspartyl/glutamyl-tRNA(Asn/Gln) amidotransferase subunit C.